The sequence spans 311 residues: Protein nfe2 (311 aa).

In terms of biological role, responsible for the nodulation efficiency and competitive ability of strain GR4 on alfalfa roots. The chain is Protein nfe2 (nfe2) from Rhizobium meliloti (Ensifer meliloti).